Here is a 393-residue protein sequence, read N- to C-terminus: Na(+)/H(+) antiporter NhaA 2 (393 aa).

Helical transmembrane passes span 18 to 38 (SGGL…NSQL), 53 to 73 (LSVQ…MVGL), 91 to 111 (ILPG…YLAF), 120 to 140 (GWAI…SLLG), 149 to 169 (VFLA…IGLF), 172 to 192 (TGVS…LVAL), 208 to 228 (LVLW…GVLL), 263 to 283 (FIIV…GLGM), 294 to 314 (VAAG…LLLV), 332 to 352 (GTTL…LLAF), and 363 to 383 (IGIL…LRFS).

The protein belongs to the NhaA Na(+)/H(+) (TC 2.A.33) antiporter family.

It localises to the cell inner membrane. The enzyme catalyses Na(+)(in) + 2 H(+)(out) = Na(+)(out) + 2 H(+)(in). Functionally, na(+)/H(+) antiporter that extrudes sodium in exchange for external protons. This is Na(+)/H(+) antiporter NhaA 2 from Brucella anthropi (strain ATCC 49188 / DSM 6882 / CCUG 24695 / JCM 21032 / LMG 3331 / NBRC 15819 / NCTC 12168 / Alc 37) (Ochrobactrum anthropi).